A 244-amino-acid polypeptide reads, in one-letter code: 3-oxoacyl-[acyl-carrier-protein] reductase FabG (244 aa).

NADP(+) contacts are provided by residues 12–15 (GASR), threonine 37, 59–60 (NV), and asparagine 86. Serine 138 contributes to the substrate binding site. The active-site Proton acceptor is the tyrosine 151. Residues 151-155 (YAAAK) and isoleucine 184 each bind NADP(+).

The protein belongs to the short-chain dehydrogenases/reductases (SDR) family. Homotetramer.

The enzyme catalyses a (3R)-hydroxyacyl-[ACP] + NADP(+) = a 3-oxoacyl-[ACP] + NADPH + H(+). It functions in the pathway lipid metabolism; fatty acid biosynthesis. Its function is as follows. Catalyzes the NADPH-dependent reduction of beta-ketoacyl-ACP substrates to beta-hydroxyacyl-ACP products, the first reductive step in the elongation cycle of fatty acid biosynthesis. The chain is 3-oxoacyl-[acyl-carrier-protein] reductase FabG (fabG) from Vibrio harveyi (Beneckea harveyi).